The chain runs to 258 residues: Type III pantothenate kinase (258 aa).

6-13 (DVGNTNTV) serves as a coordination point for ATP. Substrate is bound by residues tyrosine 100 and 107–110 (GADR). Aspartate 109 (proton acceptor) is an active-site residue. Aspartate 129 contacts K(+). Threonine 132 provides a ligand contact to ATP. Threonine 184 is a binding site for substrate.

This sequence belongs to the type III pantothenate kinase family. Homodimer. NH4(+) serves as cofactor. It depends on K(+) as a cofactor.

The protein resides in the cytoplasm. The enzyme catalyses (R)-pantothenate + ATP = (R)-4'-phosphopantothenate + ADP + H(+). It participates in cofactor biosynthesis; coenzyme A biosynthesis; CoA from (R)-pantothenate: step 1/5. Functionally, catalyzes the phosphorylation of pantothenate (Pan), the first step in CoA biosynthesis. The sequence is that of Type III pantothenate kinase from Geobacillus thermodenitrificans (strain NG80-2).